Here is a 323-residue protein sequence, read N- to C-terminus: tRNA-modifying protein YgfZ (323 aa).

Folate-binding residues include tryptophan 29 and tryptophan 182.

This sequence belongs to the tRNA-modifying YgfZ family.

It localises to the cytoplasm. Its function is as follows. Folate-binding protein involved in regulating the level of ATP-DnaA and in the modification of some tRNAs. It is probably a key factor in regulatory networks that act via tRNA modification, such as initiation of chromosomal replication. This is tRNA-modifying protein YgfZ from Vibrio atlanticus (strain LGP32) (Vibrio splendidus (strain Mel32)).